Here is a 215-residue protein sequence, read N- to C-terminus: MSKVYDWFEERLEIQAIADDITSKYVPPHVNIFYCLGGITLTCFLVQVATGFAMTFYYRPTVTEAFSSVQYIMTEANFGWLIRSVHRWSASMMVLMMILHVFRVYLTGGFKKPRELTWVTGVVLAVLTASFGVTGYSLPWDQIGYWAVKIVTGVPDAIPVIGSPLVELLRGSASVGQSTLTRFYSLHTFVLPLLTAVFMLMHFPMIRKQGISGPL.

Residues 32–52 (IFYCLGGITLTCFLVQVATGF) form a helical membrane-spanning segment. Cysteine 35 lines the heme c pocket. Heme b-binding residues include histidine 86 and histidine 100. A run of 3 helical transmembrane segments spans residues 90 to 110 (ASMMVLMMILHVFRVYLTGGF), 116 to 136 (LTWVTGVVLAVLTASFGVTGY), and 186 to 206 (LHTFVLPLLTAVFMLMHFPMI). Heme b-binding residues include histidine 187 and histidine 202.

Belongs to the cytochrome b family. PetB subfamily. The 4 large subunits of the cytochrome b6-f complex are cytochrome b6, subunit IV (17 kDa polypeptide, PetD), cytochrome f and the Rieske protein, while the 4 small subunits are PetG, PetL, PetM and PetN. The complex functions as a dimer. Heme b is required as a cofactor. The cofactor is heme c.

It is found in the plastid. The protein resides in the chloroplast thylakoid membrane. Functionally, component of the cytochrome b6-f complex, which mediates electron transfer between photosystem II (PSII) and photosystem I (PSI), cyclic electron flow around PSI, and state transitions. In Agrostis stolonifera (Creeping bentgrass), this protein is Cytochrome b6.